The chain runs to 306 residues: UDP-N-acetylenolpyruvoylglucosamine reductase (306 aa).

The FAD-binding PCMH-type domain maps to 34-198 (VGGPADLLIT…LEVTFKLHNS (165 aa)). Residue Arg-177 is part of the active site. The active-site Proton donor is Ser-227. Glu-297 is an active-site residue.

Belongs to the MurB family. The cofactor is FAD.

It localises to the cytoplasm. The catalysed reaction is UDP-N-acetyl-alpha-D-muramate + NADP(+) = UDP-N-acetyl-3-O-(1-carboxyvinyl)-alpha-D-glucosamine + NADPH + H(+). It functions in the pathway cell wall biogenesis; peptidoglycan biosynthesis. Its function is as follows. Cell wall formation. This Clostridium botulinum (strain 657 / Type Ba4) protein is UDP-N-acetylenolpyruvoylglucosamine reductase.